We begin with the raw amino-acid sequence, 479 residues long: MPRFVDRVVIHTRAGSGGNGCASVHREKFKPLGGPDGGNGGRGGSVVFVVDPQVHTLLDFHFRPHVTAASGKQGMGSNRDGAAGADLEVKVPDGTVVLDDNGRLLADLVGAGTRFEAAAGGRGGLGNAALASRARKAPGFALLGEPGQARDLTLELKTVADVGLVGFPSAGKSSLVSVISAAKPKIADYPFTTLVPNLGVVAAGGHSFIVADVPGLIPGASQGRGLGLDFLRHIERCAVLVHVVDCATAEPGRDPISDIDALEAELAAYQPTLQGDAVLDDLAERPRAVVLNKIDVPEARELAEFVEDELAQRGWPVFLVSTVTRENLQPLIFGLWQMVSEYNAARPQAAPRRPVIRPVPVDDSGFDVQADGHGGFVVTGARPERWIGQTNFDNDEAVGYLADRLARLGVEEELLRLGAKPGCAVTIGEMTFDWEPQTPAGGHVAMSGRGTDVRLERSDRVGAAERKAARRQRRERDDD.

The 158-residue stretch at 2–159 (PRFVDRVVIH…RDLTLELKTV (158 aa)) folds into the Obg domain. Residues 160–340 (ADVGLVGFPS…LIFGLWQMVS (181 aa)) enclose the OBG-type G domain. GTP is bound by residues 166–173 (GFPSAGKS), 191–195 (FTTLV), 212–215 (DVPG), 292–295 (NKID), and 321–323 (STV). Mg(2+)-binding residues include serine 173 and threonine 193. An OCT domain is found at 358-436 (PVPVDDSGFD…IGEMTFDWEP (79 aa)). Residues 438 to 479 (TPAGGHVAMSGRGTDVRLERSDRVGAAERKAARRQRRERDDD) are disordered. A compositionally biased stretch (basic and acidic residues) spans 451–467 (TDVRLERSDRVGAAERK).

This sequence belongs to the TRAFAC class OBG-HflX-like GTPase superfamily. OBG GTPase family. As to quaternary structure, monomer. Mg(2+) is required as a cofactor.

The protein resides in the cytoplasm. An essential GTPase which binds GTP, GDP and possibly (p)ppGpp with moderate affinity, with high nucleotide exchange rates and a fairly low GTP hydrolysis rate. Plays a role in control of the cell cycle, stress response, ribosome biogenesis and in those bacteria that undergo differentiation, in morphogenesis control. This chain is GTPase Obg, found in Mycobacterium marinum (strain ATCC BAA-535 / M).